Here is a 467-residue protein sequence, read N- to C-terminus: Signal transduction histidine-protein kinase BaeS (467 aa).

The Cytoplasmic portion of the chain corresponds to 1–11 (MKFWRPGITGK). Residues 12–32 (LFLAIFATCIVLLISMHWAVR) form a helical membrane-spanning segment. The Periplasmic portion of the chain corresponds to 33–167 (ISFERGFIDY…NFDKQQRQTS (135 aa)). A helical transmembrane segment spans residues 168–186 (WLIVALATLLAALATFLLA). One can recognise an HAMP domain in the interval 187–239 (RGLLAPVKRLVDGTHKLAAGDFTTRVTPTSEDELGKLAQDFNQLASTLEKNQQ). Residues 187–467 (RGLLAPVKRL…PLERDLQREV (281 aa)) lie on the Cytoplasmic side of the membrane. Residues 247-461 (DISHELRTPL…SITVELPLER (215 aa)) enclose the Histidine kinase domain. The residue at position 250 (H250) is a Phosphohistidine; by autocatalysis.

Post-translationally, autophosphorylated.

The protein resides in the cell inner membrane. The catalysed reaction is ATP + protein L-histidine = ADP + protein N-phospho-L-histidine.. In terms of biological role, member of the two-component regulatory system BaeS/BaeR which responds to envelope stress. Activates expression of periplasmic chaperone spy in response to spheroplast formation, indole and P pili protein PapG overexpression. Activates BaeR by phosphorylation which then activates the mdtABCD and probably the CRISPR-Cas casABCDE-ygbT-ygbF operons. The chain is Signal transduction histidine-protein kinase BaeS from Escherichia coli (strain K12).